A 111-amino-acid polypeptide reads, in one-letter code: Large ribosomal subunit protein eL33z (111 aa).

It belongs to the eukaryotic ribosomal protein eL33 family.

The chain is Large ribosomal subunit protein eL33z (RPL35AB) from Arabidopsis thaliana (Mouse-ear cress).